A 288-amino-acid chain; its full sequence is Syntaxin-1A (288 aa).

The segment covering 1-13 (MKDRTQELRTAKD) has biased composition (basic and acidic residues). The tract at residues 1-20 (MKDRTQELRTAKDSDDDDDV) is disordered. The Cytoplasmic segment spans residues 1–265 (MKDRTQELRT…KYQSKARRKK (265 aa)). Phosphoserine is present on residues Ser-14, Ser-64, and Ser-95. Positions 68–109 (DEKTKEELEELMSDIKKTANKVRSKLKSIEQSIEQEEGLNRS) form a coiled coil. Ser-188 carries the phosphoserine; by DAPK1 modification. The 63-residue stretch at 192–254 (LSEIETRHSE…ERAVSDTKKA (63 aa)) folds into the t-SNARE coiled-coil homology domain. Residues Lys-252, Lys-253, and Lys-256 each participate in a glycyl lysine isopeptide (Lys-Gly) (interchain with G-Cter in SUMO) cross-link. A helical; Anchor for type IV membrane protein membrane pass occupies residues 266 to 288 (IMIIICCVILGIIIASTIGGIFG).

It belongs to the syntaxin family. Part of the SNARE core complex containing SNAP25, VAMP2 and STX1A; this complex constitutes the basic catalytic machinery of the complex neurotransmitter release apparatus. The SNARE complex interacts with CPLX1. Interacts with STXBP1. The interaction with STXBP1 promotes assembly of the SNARE complex. Interacts (via C-terminus) with KCNB1 (via C-terminus); the interaction increases in a calcium-dependent manner and induces a pore-independent enhancement of exocytosis in neuroendocrine cells, chromaffin cells, pancreatic beta cells and from the soma of dorsal root ganglia (DRG) neurons. Interacts with SYTL4. Interacts with STXBP6. Interacts with PLCL1 (via C2 domain). Interacts with OTOF. Interacts with LGI3. Interacts (via the H3 domain) with SLC6A4 (via the N-terminus); this interaction regulates SLC4A6 channel conductance in thalamocortical neurons. Interacts with SYT6 and SYT8; the interaction is Ca(2+)-dependent. Interacts with VAMP8. Interacts with SNAP23. Interacts with VAPA and SYBU. Interacts with PRRT2. Interacts with SEPT8. Interacts with STXBP5L. Interacts with synaptotagmin-1/SYT1. Interacts with SEPTIN5; in the cerebellar cortex. Interacts with SEPTIN4; in the striatum. In terms of processing, phosphorylated by CK2. Phosphorylation at Ser-188 by DAPK1 significantly decreases its interaction with STXBP1. (Microbial infection) Targeted and hydrolyzed by C.botulinum neurotoxin type C (BoNT/C), which hydrolyzes the 253-Lys-|-Ala-254 bond. Cleavage inhibits neurotransmitter release. Post-translationally, phosphorylated by CK2. Phosphorylation at Ser-188 by DAPK1 significantly decreases its interaction with STXBP1. In terms of processing, sumoylated, sumoylation is required for regulation of synaptic vesicle endocytosis. Expressed predominantly in cerebral cortex, hippocampus, cerebellum, adrenal medulla and retina with weak expression detected in non-neuronal tissues.

The protein localises to the cytoplasmic vesicle. Its subcellular location is the secretory vesicle. It is found in the synaptic vesicle membrane. The protein resides in the cell membrane. It localises to the synapse. The protein localises to the synaptosome. In terms of biological role, plays an essential role in hormone and neurotransmitter calcium-dependent exocytosis and endocytosis. Part of the SNARE (Soluble NSF Attachment Receptor) complex composed of SNAP25, STX1A and VAMP2 which mediates the fusion of synaptic vesicles with the presynaptic plasma membrane. STX1A and SNAP25 are localized on the plasma membrane while VAMP2 resides in synaptic vesicles. The pairing of the three SNAREs from the N-terminal SNARE motifs to the C-terminal anchors leads to the formation of the SNARE complex, which brings membranes into close proximity and results in final fusion. Participates in the calcium-dependent regulation of acrosomal exocytosis in sperm. Also plays an important role in the exocytosis of hormones such as insulin or glucagon-like peptide 1 (GLP-1). The protein is Syntaxin-1A (Stx1a) of Rattus norvegicus (Rat).